We begin with the raw amino-acid sequence, 962 residues long: UBP9-binding protein bun107 (962 aa).

WD repeat units follow at residues D25–S69, A77–L116, E121–R162, V172–D211, G214–S253, and K302–V339. Residues S568–P578 are compositionally biased toward low complexity. Disordered stretches follow at residues S568–S615 and R702–L758. Polar residues predominate over residues R707–K723. A Phosphoserine modification is found at S717. Over residues T724–T738 the composition is skewed to low complexity.

Interacts with ubp9 and bun62.

It is found in the cytoplasm. The protein localises to the cell tip. Functionally, required for the ubp9 recruitment to septa and cell tips but also for its enzymatic activity at these specific locations. This chain is UBP9-binding protein bun107 (bun107), found in Schizosaccharomyces pombe (strain 972 / ATCC 24843) (Fission yeast).